The sequence spans 206 residues: Small ribosomal subunit protein uS4 (206 aa).

An S4 RNA-binding domain is found at 98 to 164 (MRLDNVVYRL…EKFKTFIENP (67 aa)).

This sequence belongs to the universal ribosomal protein uS4 family. Part of the 30S ribosomal subunit. Contacts protein S5. The interaction surface between S4 and S5 is involved in control of translational fidelity.

One of the primary rRNA binding proteins, it binds directly to 16S rRNA where it nucleates assembly of the body of the 30S subunit. Its function is as follows. With S5 and S12 plays an important role in translational accuracy. This is Small ribosomal subunit protein uS4 from Clostridium tetani (strain Massachusetts / E88).